Here is a 326-residue protein sequence, read N- to C-terminus: Putative GTPase CC_2483 (326 aa).

Residues 61-69, D203, and 238-240 contribute to the GTP site; these read GVPGAGKST and SGL.

Belongs to the SIMIBI class G3E GTPase family. ArgK/MeaB subfamily.

Its function is as follows. May have GTPase activity. May also bind and hydrolyze ATP. May function as chaperone. This chain is Putative GTPase CC_2483, found in Caulobacter vibrioides (strain ATCC 19089 / CIP 103742 / CB 15) (Caulobacter crescentus).